The sequence spans 137 residues: ATP synthase epsilon chain, chloroplastic (137 aa).

This sequence belongs to the ATPase epsilon chain family. F-type ATPases have 2 components, CF(1) - the catalytic core - and CF(0) - the membrane proton channel. CF(1) has five subunits: alpha(3), beta(3), gamma(1), delta(1), epsilon(1). CF(0) has three main subunits: a, b and c.

The protein localises to the plastid. It localises to the chloroplast thylakoid membrane. Its function is as follows. Produces ATP from ADP in the presence of a proton gradient across the membrane. This chain is ATP synthase epsilon chain, chloroplastic, found in Pinus koraiensis (Korean pine).